Here is a 218-residue protein sequence, read N- to C-terminus: Large ribosomal subunit protein uL2c (218 aa).

Residues 165-192 (GVVKNPVDHPHGGGEGRSPIGRSHPVTP) are disordered.

It belongs to the universal ribosomal protein uL2 family. In terms of assembly, part of the 50S ribosomal subunit.

Its subcellular location is the plastid. It localises to the chloroplast. In Bigelowiella natans (Pedinomonas minutissima), this protein is Large ribosomal subunit protein uL2c (rpl2).